Consider the following 230-residue polypeptide: Ion-translocating oxidoreductase complex subunit E (230 aa).

Transmembrane regions (helical) follow at residues 18–38 (ALVQLLGLCPLLAVTSTATNA), 39–59 (LGLGLATTLVLTLTNLTVSAL), 63–83 (TPAEIRIPIYVMIIASVVSAV), 86–106 (LINAYAFGLYQSLGIFIPLIV), 125–145 (WLSALDGFSIGMGATGAMFVL), and 182–202 (PFLLARLPPGAFIGLGLMLAV).

The protein belongs to the NqrDE/RnfAE family. In terms of assembly, the complex is composed of six subunits: RsxA, RsxB, RsxC, RsxD, RsxE and RsxG.

It is found in the cell inner membrane. Its function is as follows. Part of a membrane-bound complex that couples electron transfer with translocation of ions across the membrane. Required to maintain the reduced state of SoxR. The chain is Ion-translocating oxidoreductase complex subunit E from Salmonella dublin (strain CT_02021853).